The following is a 281-amino-acid chain: Bifunctional protein FolD (281 aa).

Residues Gly164–Ser166, Ser189, and Thr230 each bind NADP(+).

It belongs to the tetrahydrofolate dehydrogenase/cyclohydrolase family. As to quaternary structure, homodimer.

It carries out the reaction (6R)-5,10-methylene-5,6,7,8-tetrahydrofolate + NADP(+) = (6R)-5,10-methenyltetrahydrofolate + NADPH. It catalyses the reaction (6R)-5,10-methenyltetrahydrofolate + H2O = (6R)-10-formyltetrahydrofolate + H(+). It functions in the pathway one-carbon metabolism; tetrahydrofolate interconversion. Functionally, catalyzes the oxidation of 5,10-methylenetetrahydrofolate to 5,10-methenyltetrahydrofolate and then the hydrolysis of 5,10-methenyltetrahydrofolate to 10-formyltetrahydrofolate. The protein is Bifunctional protein FolD of Dictyoglomus turgidum (strain DSM 6724 / Z-1310).